The following is a 131-amino-acid chain: UPF0102 protein AZC_4471 (131 aa).

It belongs to the UPF0102 family.

This chain is UPF0102 protein AZC_4471, found in Azorhizobium caulinodans (strain ATCC 43989 / DSM 5975 / JCM 20966 / LMG 6465 / NBRC 14845 / NCIMB 13405 / ORS 571).